Reading from the N-terminus, the 476-residue chain is Arginine biosynthesis bifunctional protein ArgJ, mitochondrial (476 aa).

Residues threonine 204, lysine 233, threonine 244, glutamate 331, asparagine 471, and threonine 476 each coordinate substrate. Threonine 244 acts as the Nucleophile in catalysis.

It belongs to the ArgJ family. As to quaternary structure, heterodimer of an alpha and a beta chain. In terms of processing, the alpha and beta chains are autoproteolytically processed from a single precursor protein within the mitochondrion.

The protein localises to the mitochondrion matrix. The catalysed reaction is N(2)-acetyl-L-ornithine + L-glutamate = N-acetyl-L-glutamate + L-ornithine. The enzyme catalyses L-glutamate + acetyl-CoA = N-acetyl-L-glutamate + CoA + H(+). The protein operates within amino-acid biosynthesis; L-arginine biosynthesis; L-ornithine and N-acetyl-L-glutamate from L-glutamate and N(2)-acetyl-L-ornithine (cyclic): step 1/1. It functions in the pathway amino-acid biosynthesis; L-arginine biosynthesis; N(2)-acetyl-L-ornithine from L-glutamate: step 1/4. Functionally, catalyzes two activities which are involved in the cyclic version of arginine biosynthesis: the synthesis of acetylglutamate from glutamate and acetyl-CoA, and of ornithine by transacetylation between acetylornithine and glutamate. This is Arginine biosynthesis bifunctional protein ArgJ, mitochondrial from Arthroderma otae (strain ATCC MYA-4605 / CBS 113480) (Microsporum canis).